Consider the following 223-residue polypeptide: ATP-dependent Clp protease proteolytic subunit 2 (223 aa).

S118 (nucleophile) is an active-site residue. H143 is a catalytic residue.

The protein belongs to the peptidase S14 family. In terms of assembly, fourteen ClpP subunits assemble into 2 heptameric rings which stack back to back to give a disk-like structure with a central cavity, resembling the structure of eukaryotic proteasomes.

Its subcellular location is the cytoplasm. The catalysed reaction is Hydrolysis of proteins to small peptides in the presence of ATP and magnesium. alpha-casein is the usual test substrate. In the absence of ATP, only oligopeptides shorter than five residues are hydrolyzed (such as succinyl-Leu-Tyr-|-NHMec, and Leu-Tyr-Leu-|-Tyr-Trp, in which cleavage of the -Tyr-|-Leu- and -Tyr-|-Trp bonds also occurs).. Its function is as follows. Cleaves peptides in various proteins in a process that requires ATP hydrolysis. Has a chymotrypsin-like activity. Plays a major role in the degradation of misfolded proteins. This chain is ATP-dependent Clp protease proteolytic subunit 2, found in Leifsonia xyli subsp. xyli (strain CTCB07).